The sequence spans 304 residues: Glutaminase (304 aa).

Residues S63, N113, E157, N164, Y188, Y240, and V258 each coordinate substrate.

Belongs to the glutaminase family. In terms of assembly, homotetramer.

The catalysed reaction is L-glutamine + H2O = L-glutamate + NH4(+). The chain is Glutaminase from Paraburkholderia phytofirmans (strain DSM 17436 / LMG 22146 / PsJN) (Burkholderia phytofirmans).